A 208-amino-acid polypeptide reads, in one-letter code: Large ribosomal subunit protein uL3 (208 aa).

The interval 122 to 148 (KRHGQSRGPMAHGSRYHRRPGSMGPVA) is disordered.

This sequence belongs to the universal ribosomal protein uL3 family. As to quaternary structure, part of the 50S ribosomal subunit. Forms a cluster with proteins L14 and L19.

Its function is as follows. One of the primary rRNA binding proteins, it binds directly near the 3'-end of the 23S rRNA, where it nucleates assembly of the 50S subunit. The sequence is that of Large ribosomal subunit protein uL3 from Streptococcus pyogenes serotype M1.